We begin with the raw amino-acid sequence, 183 residues long: MTATAQQLEFLKNSIKSIQDYPKPGILFRDVTSLLEDPKAYTLSIELLVERYKKAGITKVVGTEARGFLFGAPVALGLGVGFVPVRKPRKLPRETIAETYELEYGTDQLEIHVDAIKPGDNVLVVDDLLATGGTIEATVKLIRRLGGKVTDAAFIINLFDLGGEQRLEKQGITCYSLVPFPGH.

This sequence belongs to the purine/pyrimidine phosphoribosyltransferase family. As to quaternary structure, homodimer.

The protein resides in the cytoplasm. The catalysed reaction is AMP + diphosphate = 5-phospho-alpha-D-ribose 1-diphosphate + adenine. The protein operates within purine metabolism; AMP biosynthesis via salvage pathway; AMP from adenine: step 1/1. In terms of biological role, catalyzes a salvage reaction resulting in the formation of AMP, that is energically less costly than de novo synthesis. The chain is Adenine phosphoribosyltransferase from Salmonella arizonae (strain ATCC BAA-731 / CDC346-86 / RSK2980).